Here is a 101-residue protein sequence, read N- to C-terminus: Aspartyl/glutamyl-tRNA(Asn/Gln) amidotransferase subunit C (101 aa).

It belongs to the GatC family. As to quaternary structure, heterotrimer of A, B and C subunits.

It carries out the reaction L-glutamyl-tRNA(Gln) + L-glutamine + ATP + H2O = L-glutaminyl-tRNA(Gln) + L-glutamate + ADP + phosphate + H(+). It catalyses the reaction L-aspartyl-tRNA(Asn) + L-glutamine + ATP + H2O = L-asparaginyl-tRNA(Asn) + L-glutamate + ADP + phosphate + 2 H(+). Allows the formation of correctly charged Asn-tRNA(Asn) or Gln-tRNA(Gln) through the transamidation of misacylated Asp-tRNA(Asn) or Glu-tRNA(Gln) in organisms which lack either or both of asparaginyl-tRNA or glutaminyl-tRNA synthetases. The reaction takes place in the presence of glutamine and ATP through an activated phospho-Asp-tRNA(Asn) or phospho-Glu-tRNA(Gln). The polypeptide is Aspartyl/glutamyl-tRNA(Asn/Gln) amidotransferase subunit C (Lactococcus lactis subsp. cremoris (strain SK11)).